The primary structure comprises 346 residues: Methionine import ATP-binding protein MetN 1 (346 aa).

Residues 2 to 241 form the ABC transporter domain; that stretch reads IEFKQVTKTF…PQHPTTEKFV (240 aa). 38 to 45 lines the ATP pocket; that stretch reads GFSGAGKS.

This sequence belongs to the ABC transporter superfamily. Methionine importer (TC 3.A.1.24) family. In terms of assembly, the complex is composed of two ATP-binding proteins (MetN), two transmembrane proteins (MetI) and a solute-binding protein (MetQ).

Its subcellular location is the cell membrane. It carries out the reaction L-methionine(out) + ATP + H2O = L-methionine(in) + ADP + phosphate + H(+). The catalysed reaction is D-methionine(out) + ATP + H2O = D-methionine(in) + ADP + phosphate + H(+). In terms of biological role, part of the ABC transporter complex MetNIQ involved in methionine import. Responsible for energy coupling to the transport system. The sequence is that of Methionine import ATP-binding protein MetN 1 from Shouchella clausii (strain KSM-K16) (Alkalihalobacillus clausii).